The sequence spans 198 residues: Sporulation-specific protein 16 (198 aa).

Its function is as follows. Necessary for efficient spore formation. In Saccharomyces cerevisiae (strain ATCC 204508 / S288c) (Baker's yeast), this protein is Sporulation-specific protein 16 (SPO16).